We begin with the raw amino-acid sequence, 190 residues long: Ribose 1,5-bisphosphate phosphokinase PhnN (190 aa).

ATP is bound at residue 19–26; sequence GPSGVGKD.

The protein belongs to the ribose 1,5-bisphosphokinase family.

It catalyses the reaction alpha-D-ribose 1,5-bisphosphate + ATP = 5-phospho-alpha-D-ribose 1-diphosphate + ADP. The protein operates within metabolic intermediate biosynthesis; 5-phospho-alpha-D-ribose 1-diphosphate biosynthesis; 5-phospho-alpha-D-ribose 1-diphosphate from D-ribose 5-phosphate (route II): step 3/3. In terms of biological role, catalyzes the phosphorylation of ribose 1,5-bisphosphate to 5-phospho-D-ribosyl alpha-1-diphosphate (PRPP). The polypeptide is Ribose 1,5-bisphosphate phosphokinase PhnN (Ruegeria sp. (strain TM1040) (Silicibacter sp.)).